The following is a 159-amino-acid chain: Ribosomal RNA large subunit methyltransferase H (159 aa).

Residues leucine 76, glycine 108, and 127-132 (FGLLTL) each bind S-adenosyl-L-methionine.

This sequence belongs to the RNA methyltransferase RlmH family. Homodimer.

The protein resides in the cytoplasm. It catalyses the reaction pseudouridine(1915) in 23S rRNA + S-adenosyl-L-methionine = N(3)-methylpseudouridine(1915) in 23S rRNA + S-adenosyl-L-homocysteine + H(+). In terms of biological role, specifically methylates the pseudouridine at position 1915 (m3Psi1915) in 23S rRNA. The chain is Ribosomal RNA large subunit methyltransferase H from Streptococcus pyogenes serotype M12 (strain MGAS2096).